Reading from the N-terminus, the 114-residue chain is MAGLALQPGTALLCYSCKAQVSNEDCLQVENCTQLGEQCWTARIRAVGLLTVISKGCSLNCVDDSQDYYVGKKNITCCDTDLCNASGAHALQPAAAILALLPALGLLLWGPGQL.

A signal peptide spans 1–11 (MAGLALQPGTA). One can recognise a UPAR/Ly6 domain in the interval 12–86 (LLCYSCKAQV…CCDTDLCNAS (75 aa)). 5 disulfides stabilise this stretch: C14-C39, C17-C26, C32-C57, C61-C77, and C78-C83. A glycan (N-linked (GlcNAc...) asparagine) is linked at N31. S86 carries GPI-anchor amidated serine lipidation. Residues 86 to 114 (SGAHALQPAAAILALLPALGLLLWGPGQL) constitute a propeptide, removed in mature form.

In terms of assembly, interacts with CHRNA4. Post-translationally, N-glycosylated. As to expression, highly expressed in prostate (basal, secretory and neuroendocrine epithelium cells). Also found in bladder (transitional epithelium), placenta (trophoblasts), stomach (neuroendocrine cells), colon (neuroendocrine cells) and kidney (collecting ducts). Overexpressed in prostate cancers and expression is correlated with tumor stage, grade and androgen-independence. Highly expressed in prostate cancer bone metastases. Expressed in gastric epithelial cells, mainly in the isthmus (at protein level). Not detected in normal intestinal epithelium (at protein level). Expressed in brain cortex; expression is significantly increased in the front cortex of Alzheimer disease patients.

It localises to the cell membrane. Functionally, may be involved in the regulation of cell proliferation. Has a cell-proliferation inhibition activity in vitro. In terms of biological role, may act as a modulator of nicotinic acetylcholine receptors (nAChRs) activity. In vitro inhibits nicotine-induced signaling probably implicating alpha-3:beta-2- or alpha-7-containing nAChRs. The polypeptide is Prostate stem cell antigen (PSCA) (Homo sapiens (Human)).